The chain runs to 130 residues: Small ribosomal subunit protein uS9 (130 aa).

This sequence belongs to the universal ribosomal protein uS9 family.

The chain is Small ribosomal subunit protein uS9 from Hahella chejuensis (strain KCTC 2396).